A 259-amino-acid polypeptide reads, in one-letter code: Zinc import ATP-binding protein ZnuC (259 aa).

The ABC transporter domain maps to 6–223 (VTVQSVSVTL…PAYHELFGPG (218 aa)). 38–45 (GPNGAGKS) provides a ligand contact to ATP. The tract at residues 230-259 (ALYTHDHDHDHDLHGNATHSHDHNGPCNHD) is disordered. The span at 233 to 259 (THDHDHDHDLHGNATHSHDHNGPCNHD) shows a compositional bias: basic and acidic residues.

This sequence belongs to the ABC transporter superfamily. Zinc importer (TC 3.A.1.15.5) family. The complex is composed of two ATP-binding proteins (ZnuC), two transmembrane proteins (ZnuB) and a solute-binding protein (ZnuA).

The protein resides in the cell inner membrane. It catalyses the reaction Zn(2+)(out) + ATP(in) + H2O(in) = Zn(2+)(in) + ADP(in) + phosphate(in) + H(+)(in). Functionally, part of the ABC transporter complex ZnuABC involved in zinc import. Responsible for energy coupling to the transport system. The protein is Zinc import ATP-binding protein ZnuC of Alcanivorax borkumensis (strain ATCC 700651 / DSM 11573 / NCIMB 13689 / SK2).